The sequence spans 221 residues: Putative N-acetylmannosamine-6-phosphate 2-epimerase (221 aa).

Belongs to the NanE family.

It catalyses the reaction an N-acyl-D-glucosamine 6-phosphate = an N-acyl-D-mannosamine 6-phosphate. It participates in amino-sugar metabolism; N-acetylneuraminate degradation; D-fructose 6-phosphate from N-acetylneuraminate: step 3/5. In terms of biological role, converts N-acetylmannosamine-6-phosphate (ManNAc-6-P) to N-acetylglucosamine-6-phosphate (GlcNAc-6-P). This is Putative N-acetylmannosamine-6-phosphate 2-epimerase from Clostridium perfringens (strain ATCC 13124 / DSM 756 / JCM 1290 / NCIMB 6125 / NCTC 8237 / Type A).